A 420-amino-acid polypeptide reads, in one-letter code: MSWRDLPRLRLWLKTEAIPGEGRKAAKVNAGVGEKGIYTASSRGGPPSARSKAVAVVAQGAASRSRLSMDAPELGPGLVERLEQLATCPLCGGSFEDPVLLACEHSFCRACLARRWGTPPATDTEASPTACPCCGLPCPRRSLRSNVRLAVEVRISRELREKLAEPGARAGRRRGGRIPTMGCLDPPGEDMRKTWRRFEVPTPKSSKSEDDLPEDYPVVKNMLHRLTADLTLDPGTAHRRLLISADRRSVQLAPPGTPAPPDGPKRFDQLPAVLGAQGFGAGRHCWEVETADAASCRDSSGEDEDDEESHYAVGAAGESVQRKGCVRLCPAGAVWAVEGRGGRLWALTAPEPTLLGGAEPPPRRIRVDLDWERGRVAFYDGRSLDLLYAFQASVPLGERIFPLFCTCDPRAPLRIVPAES.

Residues 88-135 (CPLCGGSFEDPVLLACEHSFCRACLARRWGTPPATDTEASPTACPCCG) form an RING-type zinc finger. Disordered regions lie at residues 166–186 (PGAR…CLDP) and 246–265 (DRRS…DGPK). The region spanning 210–420 (DDLPEDYPVV…APLRIVPAES (211 aa)) is the B30.2/SPRY domain.

It localises to the cytoplasm. It carries out the reaction S-ubiquitinyl-[E2 ubiquitin-conjugating enzyme]-L-cysteine + [acceptor protein]-L-lysine = [E2 ubiquitin-conjugating enzyme]-L-cysteine + N(6)-ubiquitinyl-[acceptor protein]-L-lysine.. It participates in protein modification; protein ubiquitination. Plays an inhibitory role in anti-RNA viral innate immunity by targeting the adapter DDX3X and promoting its 'Lys-48'-linked polyubiquitination. Alternatively, enhances the cGAS-STING pathway activation by promoting 'Lys-63'-linked ubiquitination of STING1, facilitating the STING1-TBK1 complex formation and STING1 activation. The sequence is that of RING finger protein 39 (RNF39) from Macaca mulatta (Rhesus macaque).